Reading from the N-terminus, the 170-residue chain is Adenine phosphoribosyltransferase (170 aa).

It belongs to the purine/pyrimidine phosphoribosyltransferase family. Homodimer.

The protein resides in the cytoplasm. It carries out the reaction AMP + diphosphate = 5-phospho-alpha-D-ribose 1-diphosphate + adenine. It functions in the pathway purine metabolism; AMP biosynthesis via salvage pathway; AMP from adenine: step 1/1. Its function is as follows. Catalyzes a salvage reaction resulting in the formation of AMP, that is energically less costly than de novo synthesis. This Kosmotoga olearia (strain ATCC BAA-1733 / DSM 21960 / TBF 19.5.1) protein is Adenine phosphoribosyltransferase.